Consider the following 390-residue polypeptide: Scoulerine-9-O-methyltransferase 1 (390 aa).

Position 153 (Glu-153) interacts with substrate. S-adenosyl-L-methionine is bound by residues Met-207, Ser-211, Gly-235, Asp-258, 278–279 (DM), and Lys-292. His-296 (proton acceptor) is an active-site residue. Substrate is bound at residue 296–297 (HD).

This sequence belongs to the class I-like SAM-binding methyltransferase superfamily. Cation-independent O-methyltransferase family. COMT subfamily. In terms of assembly, homodimer. As to expression, highly expressed in capsules. Expressed is stems. Expressed at low levels in roots.

It catalyses the reaction (S)-scoulerine + S-adenosyl-L-methionine = (S)-tetrahydrocolumbamine + S-adenosyl-L-homocysteine + H(+). The enzyme catalyses (S)-tetrahydrocolumbamine + S-adenosyl-L-methionine = (S)-tetrahydropalmatine + S-adenosyl-L-homocysteine + H(+). The catalysed reaction is (S)-norreticuline + S-adenosyl-L-methionine = (S)-norcodamine + S-adenosyl-L-homocysteine + H(+). It carries out the reaction (S)-reticuline + S-adenosyl-L-methionine = (S)-codamine + S-adenosyl-L-homocysteine + H(+). It functions in the pathway alkaloid biosynthesis. Functionally, methyltransferase involved in the biosynthesis of the benzylisoquinoline alkaloid noscapine. Catalyzes the conversion of (S)-scoulerine to (S)-tetrahydrocolumbamine. Can convert (S)-tetrahydrocolumbamine to tetrahydropalmatine. Can convert (S)-norreticuline to (S)-norcodamine. Can convert (S)-reticuline to (S)-codamine. Substrate preference is (S)-scoulerine &gt; (S)-tetrahydrocolumbamine &gt; (S)-norreticuline &gt; (S)-reticuline. The protein is Scoulerine-9-O-methyltransferase 1 of Papaver somniferum (Opium poppy).